Consider the following 397-residue polypeptide: Xyloglucan O-acetyltransferase 3 (397 aa).

Over 1–3 (MNR) the chain is Cytoplasmic. The helical; Signal-anchor for type II membrane protein transmembrane segment at 4 to 24 (FFYTVGLIFLFSFFILYSPKT) threads the bilayer. Topologically, residues 25–397 (SDLSNNVDLH…RHAFTDFTWS (373 aa)) are lumenal. Disulfide bonds link Cys48–Cys98, Cys69–Cys134, Cys78–Cys370, and Cys293–Cys366. N-linked (GlcNAc...) asparagine glycosylation occurs at Asn66. Positions 121–123 (GDS) match the GDS motif motif. The active-site Nucleophile is the Ser123. Asn162, Asn182, and Asn294 each carry an N-linked (GlcNAc...) asparagine glycan. Residue Asp365 is the Proton donor of the active site. A DXXH motif motif is present at residues 365 to 368 (DCVH). His368 serves as the catalytic Proton acceptor.

Belongs to the PC-esterase family. TBL subfamily.

It localises to the golgi apparatus membrane. Its function is as follows. Xyloglucan acetyltransferase that catalyzes the acetylation of fucosylated Gal residues on xyloglucan side chains. Predominantly catalyze 6-O-monoacetylation of Gal residues in the Fuc-Gal-Xyl trisaccharide side chains of xyloglucan oligomers. The polypeptide is Xyloglucan O-acetyltransferase 3 (Populus trichocarpa (Western balsam poplar)).